Consider the following 299-residue polypeptide: Beta-lactamase VEB-1 (299 aa).

The N-terminal stretch at 1–23 (MKIVKRILLVLLSLFFTIVYSNA) is a signal peptide. S68 functions as the Nucleophile; acyl-ester intermediate in the catalytic mechanism. Residues K71, S131, and E167 each coordinate a beta-lactam. Catalysis depends on E167, which acts as the Proton acceptor.

This sequence belongs to the class-A beta-lactamase family.

The enzyme catalyses a beta-lactam + H2O = a substituted beta-amino acid. Its activity is regulated as follows. Inhibited by the beta-lactamase-blocking agent clavulanic acid. Its function is as follows. Class A beta-lactamase which confers resistance to the beta-lactam antibiotics, including penicillins and cephalosporins, in E.coli strain JM109. Acts via hydrolysis of the beta-lactam ring. Has penicillin-, and cephalosporin-hydrolyzing activities. In Pseudomonas aeruginosa, this protein is Beta-lactamase VEB-1.